The sequence spans 636 residues: Putative cysteine-rich receptor-like protein kinase 33 (636 aa).

Positions 1–25 are cleaved as a signal peptide; it reads MRKTKKISFLIFWVVLISIIGAISS. Gnk2-homologous domains are found at residues 26-128 and 138-245; these read QQCN…NSSF and YMEH…LYPF. Over 26–266 the chain is Extracellular; it reads QQCNETGYFE…PGSKRNISVG (241 aa). 10 N-linked (GlcNAc...) asparagine glycosylation sites follow: Asn-29, Asn-63, Asn-105, Asn-125, Asn-149, Asn-173, Asn-185, Asn-188, Asn-250, and Asn-262. A helical membrane pass occupies residues 267 to 287; that stretch reads FFVAIVVATGVVISVLSTLVV. Residues 288-636 lie on the Cytoplasmic side of the membrane; it reads VLVCRKRKTD…DSLIDDLVPR (349 aa). The Protein kinase domain maps to 321–600; sequence FSKCNMLGQG…MMLTSNSITL (280 aa). ATP-binding positions include 327-335 and Lys-349; that span reads LGQGGFGEV. Tyr-394 carries the phosphotyrosine modification. Asp-446 serves as the catalytic Proton acceptor. Ser-450 carries the phosphoserine modification. At Thr-486 the chain carries Phosphothreonine. Tyr-494 carries the phosphotyrosine modification.

It belongs to the protein kinase superfamily. Ser/Thr protein kinase family. CRK subfamily.

It localises to the membrane. It carries out the reaction L-seryl-[protein] + ATP = O-phospho-L-seryl-[protein] + ADP + H(+). The enzyme catalyses L-threonyl-[protein] + ATP = O-phospho-L-threonyl-[protein] + ADP + H(+). The sequence is that of Putative cysteine-rich receptor-like protein kinase 33 (CRK33) from Arabidopsis thaliana (Mouse-ear cress).